Consider the following 35-residue polypeptide: Probable endonuclease 4 (35 aa).

Residue Glu15 coordinates Zn(2+).

The protein belongs to the AP endonuclease 2 family. The cofactor is Zn(2+).

The catalysed reaction is Endonucleolytic cleavage to 5'-phosphooligonucleotide end-products.. Functionally, endonuclease IV plays a role in DNA repair. It cleaves phosphodiester bonds at apurinic or apyrimidinic (AP) sites, generating a 3'-hydroxyl group and a 5'-terminal sugar phosphate. This chain is Probable endonuclease 4 (nfo), found in Yersinia enterocolitica.